Consider the following 366-residue polypeptide: Quinolinate synthase (366 aa).

Positions 44 and 61 each coordinate iminosuccinate. Cys108 is a binding site for [4Fe-4S] cluster. Iminosuccinate is bound by residues 139 to 141 and Ser160; that span reads YIN. Cys228 provides a ligand contact to [4Fe-4S] cluster. Residues 254–256 and Thr271 each bind iminosuccinate; that span reads HPE. Position 318 (Cys318) interacts with [4Fe-4S] cluster.

Belongs to the quinolinate synthase family. Type 3 subfamily. [4Fe-4S] cluster is required as a cofactor.

The protein localises to the cytoplasm. The enzyme catalyses iminosuccinate + dihydroxyacetone phosphate = quinolinate + phosphate + 2 H2O + H(+). It participates in cofactor biosynthesis; NAD(+) biosynthesis; quinolinate from iminoaspartate: step 1/1. Its function is as follows. Catalyzes the condensation of iminoaspartate with dihydroxyacetone phosphate to form quinolinate. The polypeptide is Quinolinate synthase (Listeria innocua serovar 6a (strain ATCC BAA-680 / CLIP 11262)).